The following is a 272-amino-acid chain: Acyl-[acyl-carrier-protein]--UDP-N-acetylglucosamine O-acyltransferase (272 aa).

It belongs to the transferase hexapeptide repeat family. LpxA subfamily. As to quaternary structure, homotrimer.

It is found in the cytoplasm. It carries out the reaction a (3R)-hydroxyacyl-[ACP] + UDP-N-acetyl-alpha-D-glucosamine = a UDP-3-O-[(3R)-3-hydroxyacyl]-N-acetyl-alpha-D-glucosamine + holo-[ACP]. It participates in glycolipid biosynthesis; lipid IV(A) biosynthesis; lipid IV(A) from (3R)-3-hydroxytetradecanoyl-[acyl-carrier-protein] and UDP-N-acetyl-alpha-D-glucosamine: step 1/6. Its function is as follows. Involved in the biosynthesis of lipid A, a phosphorylated glycolipid that anchors the lipopolysaccharide to the outer membrane of the cell. This chain is Acyl-[acyl-carrier-protein]--UDP-N-acetylglucosamine O-acyltransferase, found in Methylobacterium radiotolerans (strain ATCC 27329 / DSM 1819 / JCM 2831 / NBRC 15690 / NCIMB 10815 / 0-1).